We begin with the raw amino-acid sequence, 601 residues long: Serine/threonine-protein phosphatase 2A 65 kDa regulatory subunit A beta isoform (601 aa).

A2 carries the N-acetylalanine modification. HEAT repeat units lie at residues D20 to R58, T59 to D96, F97 to A135, L136 to A173, V174 to S212, V213 to D251, L252 to I290, A291 to V333, I334 to N372, T373 to Q411, L412 to F450, F451 to W489, A490 to I528, T529 to A567, and L568 to A601.

It belongs to the phosphatase 2A regulatory subunit A family. As to quaternary structure, PP2A consists of a common heterodimeric core enzyme, composed of a 36 kDa catalytic subunit (subunit C) and a 65 kDa constant regulatory subunit (PR65 or subunit A), that associates with a variety of regulatory subunits. Proteins that associate with the core dimer include three families of regulatory subunits B (the R2/B/PR55/B55, R3/B''/PR72/PR130/PR59 and R5/B'/B56 families), the 48 kDa variable regulatory subunit, viral proteins, and cell signaling molecules. Interacts with IPO9. Interacts with SGO1. Interacts with RAF1.

Functionally, the PR65 subunit of protein phosphatase 2A serves as a scaffolding molecule to coordinate the assembly of the catalytic subunit and a variable regulatory B subunit. The polypeptide is Serine/threonine-protein phosphatase 2A 65 kDa regulatory subunit A beta isoform (Ppp2r1b) (Mus musculus (Mouse)).